The sequence spans 337 residues: Large ribosomal subunit protein uL10 (337 aa).

The interval 309-337 (EEVVEEQEEVKEEEEEESDMASGLGALFG) is disordered. Positions 310–327 (EVVEEQEEVKEEEEEESD) are enriched in acidic residues.

Belongs to the universal ribosomal protein uL10 family. Part of the 50S ribosomal subunit. Forms part of the ribosomal stalk which helps the ribosome interact with GTP-bound translation factors. Forms a heptameric L10(L12)2(L12)2(L12)2 complex, where L10 forms an elongated spine to which the L12 dimers bind in a sequential fashion.

In terms of biological role, forms part of the ribosomal stalk, playing a central role in the interaction of the ribosome with GTP-bound translation factors. The protein is Large ribosomal subunit protein uL10 of Methanococcoides burtonii (strain DSM 6242 / NBRC 107633 / OCM 468 / ACE-M).